We begin with the raw amino-acid sequence, 409 residues long: Ribose-phosphate pyrophosphokinase 1 (409 aa).

Mg(2+) is bound by residues Asp128, His130, and Asp143. Ser199 is modified (phosphoserine).

This sequence belongs to the ribose-phosphate pyrophosphokinase family.

It localises to the cytoplasm. The enzyme catalyses D-ribose 5-phosphate + ATP = 5-phospho-alpha-D-ribose 1-diphosphate + AMP + H(+). Its pathway is metabolic intermediate biosynthesis; 5-phospho-alpha-D-ribose 1-diphosphate biosynthesis; 5-phospho-alpha-D-ribose 1-diphosphate from D-ribose 5-phosphate (route I): step 1/1. Functionally, 5-phosphoribose 1-diphosphate synthase involved in nucleotide, histidine, and tryptophan biosynthesis. Active in heteromultimeric complexes with other 5-phosphoribose 1-diphosphate synthases. This Schizosaccharomyces pombe (strain 972 / ATCC 24843) (Fission yeast) protein is Ribose-phosphate pyrophosphokinase 1.